Here is a 164-residue protein sequence, read N- to C-terminus: Pheromone-binding protein (164 aa).

The signal sequence occupies residues 1–22; the sequence is MSIQGQIALALMVNMAVGSVDA. Cystine bridges form between cysteine 41–cysteine 76, cysteine 72–cysteine 130, and cysteine 119–cysteine 139.

It belongs to the PBP/GOBP family. As to quaternary structure, homodimer. As to expression, antenna.

In terms of biological role, this major soluble protein in olfactory sensilla of male moths serves to solubilize the extremely hydrophobic pheromone molecules such as bombykol and to transport pheromone through the aqueous lymph to receptors located on olfactory cilia. The sequence is that of Pheromone-binding protein from Bombyx mori (Silk moth).